The chain runs to 341 residues: ATPase GET3 (341 aa).

Lysine 34–threonine 41 contacts ATP. The active site involves aspartate 63. Positions 245 and 272 each coordinate ATP. Residues cysteine 283 and cysteine 286 each contribute to the Zn(2+) site.

The protein belongs to the arsA ATPase family. Homodimer.

Its subcellular location is the cytoplasm. It is found in the endoplasmic reticulum. ATPase required for the post-translational delivery of tail-anchored (TA) proteins to the endoplasmic reticulum. Recognizes and selectively binds the transmembrane domain of TA proteins in the cytosol. This complex then targets to the endoplasmic reticulum by membrane-bound receptors, where the tail-anchored protein is released for insertion. This process is regulated by ATP binding and hydrolysis. ATP binding drives the homodimer towards the closed dimer state, facilitating recognition of newly synthesized TA membrane proteins. ATP hydrolysis is required for insertion. Subsequently, the homodimer reverts towards the open dimer state, lowering its affinity for the membrane-bound receptor, and returning it to the cytosol to initiate a new round of targeting. This chain is ATPase GET3, found in Paracoccidioides brasiliensis (strain Pb18).